Reading from the N-terminus, the 353-residue chain is Beta-hexosaminidase (353 aa).

Substrate contacts are provided by residues Asp74, Arg82, Arg149, and 179 to 180 (KH). The active-site Proton donor/acceptor is the His192. The Nucleophile role is filled by Asp263.

This sequence belongs to the glycosyl hydrolase 3 family. NagZ subfamily.

It is found in the cytoplasm. The catalysed reaction is Hydrolysis of terminal non-reducing N-acetyl-D-hexosamine residues in N-acetyl-beta-D-hexosaminides.. It functions in the pathway cell wall biogenesis; peptidoglycan recycling. Functionally, plays a role in peptidoglycan recycling by cleaving the terminal beta-1,4-linked N-acetylglucosamine (GlcNAc) from peptide-linked peptidoglycan fragments, giving rise to free GlcNAc, anhydro-N-acetylmuramic acid and anhydro-N-acetylmuramic acid-linked peptides. The chain is Beta-hexosaminidase from Bordetella bronchiseptica (strain ATCC BAA-588 / NCTC 13252 / RB50) (Alcaligenes bronchisepticus).